The chain runs to 267 residues: Diacetylchitobiose deacetylase (267 aa).

This sequence belongs to the PIGL family. Homohexamer.

It localises to the cytoplasm. It carries out the reaction N,N'-diacetylchitobiose + H2O = beta-D-glucosaminyl-(1-&gt;4)-N-acetyl-D-glucosamine + acetate. The protein operates within glycan degradation; chitin degradation. In terms of biological role, deacylates the non-reducing end of diacetylchitobiose (GlcNAc2). Can also use N-acetylglucosamine (GlcNAc) and N-acetylchitotriose (GlcNAc3). Probably involved in chitin degradation. This is Diacetylchitobiose deacetylase (dac) from Thermococcus kodakarensis (strain ATCC BAA-918 / JCM 12380 / KOD1) (Pyrococcus kodakaraensis (strain KOD1)).